The chain runs to 122 residues: Small ribosomal subunit protein uS13 (122 aa).

The disordered stretch occupies residues 94 to 122 (KKLPVRGQRTHTNARTRKGPAKPIAGKKK).

This sequence belongs to the universal ribosomal protein uS13 family. As to quaternary structure, part of the 30S ribosomal subunit. Forms a loose heterodimer with protein S19. Forms two bridges to the 50S subunit in the 70S ribosome.

Located at the top of the head of the 30S subunit, it contacts several helices of the 16S rRNA. In the 70S ribosome it contacts the 23S rRNA (bridge B1a) and protein L5 of the 50S subunit (bridge B1b), connecting the 2 subunits; these bridges are implicated in subunit movement. Contacts the tRNAs in the A and P-sites. This Hyphomonas neptunium (strain ATCC 15444) protein is Small ribosomal subunit protein uS13.